A 170-amino-acid polypeptide reads, in one-letter code: Ribosome maturation factor RimP (170 aa).

This sequence belongs to the RimP family.

The protein resides in the cytoplasm. In terms of biological role, required for maturation of 30S ribosomal subunits. This chain is Ribosome maturation factor RimP, found in Acidothermus cellulolyticus (strain ATCC 43068 / DSM 8971 / 11B).